The following is a 442-amino-acid chain: tRNA(Ile)-lysidine synthase (442 aa).

Residue 30–35 (SGGLDS) coordinates ATP.

Belongs to the tRNA(Ile)-lysidine synthase family.

The protein localises to the cytoplasm. The catalysed reaction is cytidine(34) in tRNA(Ile2) + L-lysine + ATP = lysidine(34) in tRNA(Ile2) + AMP + diphosphate + H(+). Functionally, ligates lysine onto the cytidine present at position 34 of the AUA codon-specific tRNA(Ile) that contains the anticodon CAU, in an ATP-dependent manner. Cytidine is converted to lysidine, thus changing the amino acid specificity of the tRNA from methionine to isoleucine. The sequence is that of tRNA(Ile)-lysidine synthase from Pseudomonas fluorescens (strain Pf0-1).